Here is a 473-residue protein sequence, read N- to C-terminus: ATP synthase subunit beta (473 aa).

153-160 (GGAGVGKT) is an ATP binding site.

This sequence belongs to the ATPase alpha/beta chains family. As to quaternary structure, F-type ATPases have 2 components, CF(1) - the catalytic core - and CF(0) - the membrane proton channel. CF(1) has five subunits: alpha(3), beta(3), gamma(1), delta(1), epsilon(1). CF(0) has three main subunits: a(1), b(2) and c(9-12). The alpha and beta chains form an alternating ring which encloses part of the gamma chain. CF(1) is attached to CF(0) by a central stalk formed by the gamma and epsilon chains, while a peripheral stalk is formed by the delta and b chains.

The protein resides in the cell membrane. It catalyses the reaction ATP + H2O + 4 H(+)(in) = ADP + phosphate + 5 H(+)(out). In terms of biological role, produces ATP from ADP in the presence of a proton gradient across the membrane. The catalytic sites are hosted primarily by the beta subunits. The chain is ATP synthase subunit beta from Rickettsia africae (strain ESF-5).